The following is a 565-amino-acid chain: CTP synthase (565 aa).

The tract at residues 1-268 is amidoligase domain; it reads MQTKYIFVTG…GELVVDRFYP (268 aa). Ser-14 serves as a coordination point for CTP. Ser-14 contributes to the UTP binding site. An ATP-binding site is contributed by 15 to 20; that stretch reads SLGKGI. An L-glutamine-binding site is contributed by Tyr-55. Asp-72 contributes to the ATP binding site. Mg(2+)-binding residues include Asp-72 and Glu-142. Residues 149-151, 189-194, and Lys-225 contribute to the CTP site; these read DIE and KTKPTQ. UTP is bound by residues 189-194 and Lys-225; that span reads KTKPTQ. The Glutamine amidotransferase type-1 domain maps to 301–543; sequence PIALVGKYVE…VRACTAYAHE (243 aa). Gly-363 provides a ligand contact to L-glutamine. The active-site Nucleophile; for glutamine hydrolysis is the Cys-390. L-glutamine-binding positions include 391 to 394, Glu-414, and Arg-471; that span reads LGLQ. Active-site residues include His-516 and Glu-518. The tract at residues 545–565 is disordered; sequence DLVTSPQPPERKAVPLASVDM.

This sequence belongs to the CTP synthase family. In terms of assembly, homotetramer.

The enzyme catalyses UTP + L-glutamine + ATP + H2O = CTP + L-glutamate + ADP + phosphate + 2 H(+). It carries out the reaction L-glutamine + H2O = L-glutamate + NH4(+). It catalyses the reaction UTP + NH4(+) + ATP = CTP + ADP + phosphate + 2 H(+). Its pathway is pyrimidine metabolism; CTP biosynthesis via de novo pathway; CTP from UDP: step 2/2. With respect to regulation, allosterically activated by GTP, when glutamine is the substrate; GTP has no effect on the reaction when ammonia is the substrate. The allosteric effector GTP functions by stabilizing the protein conformation that binds the tetrahedral intermediate(s) formed during glutamine hydrolysis. Inhibited by the product CTP, via allosteric rather than competitive inhibition. Functionally, catalyzes the ATP-dependent amination of UTP to CTP with either L-glutamine or ammonia as the source of nitrogen. Regulates intracellular CTP levels through interactions with the four ribonucleotide triphosphates. This Salinibacter ruber (strain DSM 13855 / M31) protein is CTP synthase.